A 232-amino-acid chain; its full sequence is Purine nucleoside phosphorylase DeoD-type (232 aa).

A purine D-ribonucleoside is bound at residue histidine 4. Phosphate-binding positions include glycine 20, arginine 24, arginine 43, and 87 to 90; that span reads RVGS. A purine D-ribonucleoside contacts are provided by residues glutamate 162, 178 to 180, and 202 to 203; these read EME and SD. The active-site Proton donor is aspartate 203.

The protein belongs to the PNP/UDP phosphorylase family. Homohexamer; trimer of homodimers.

The catalysed reaction is a purine D-ribonucleoside + phosphate = a purine nucleobase + alpha-D-ribose 1-phosphate. The enzyme catalyses a purine 2'-deoxy-D-ribonucleoside + phosphate = a purine nucleobase + 2-deoxy-alpha-D-ribose 1-phosphate. In terms of biological role, catalyzes the reversible phosphorolytic breakdown of the N-glycosidic bond in the beta-(deoxy)ribonucleoside molecules, with the formation of the corresponding free purine bases and pentose-1-phosphate. This is Purine nucleoside phosphorylase DeoD-type from Bacillus velezensis (strain DSM 23117 / BGSC 10A6 / LMG 26770 / FZB42) (Bacillus amyloliquefaciens subsp. plantarum).